Reading from the N-terminus, the 386-residue chain is Flap endonuclease 1 (386 aa).

An N-domain region spans residues 1–104; the sequence is MGILGLSKLI…GELAKRAERR (104 aa). Position 34 (aspartate 34) interacts with Mg(2+). The DNA site is built by arginine 47 and arginine 70. Mg(2+) contacts are provided by aspartate 86, glutamate 158, glutamate 160, aspartate 179, and aspartate 181. Positions 122–253 are I-domain; sequence EIEKFNRRLV…KRAIELINNY (132 aa). Glutamate 158 lines the DNA pocket. 2 residues coordinate DNA: glycine 231 and aspartate 233. A Mg(2+)-binding site is contributed by aspartate 233. Positions 336–344 are interaction with PCNA; sequence TQVRLDSFF. Residues 354–386 form a disordered region; it reads VNAAKRKAEEAKKSANNKKAKTSGGAARGRRPK.

It belongs to the XPG/RAD2 endonuclease family. FEN1 subfamily. Interacts with PCNA. Three molecules of FEN1 bind to one PCNA trimer with each molecule binding to one PCNA monomer. PCNA stimulates the nuclease activity without altering cleavage specificity. Requires Mg(2+) as cofactor. Post-translationally, phosphorylated. Phosphorylation upon DNA damage induces relocalization to the nuclear plasma.

The protein resides in the nucleus. It localises to the nucleolus. Its subcellular location is the nucleoplasm. It is found in the mitochondrion. Its function is as follows. Structure-specific nuclease with 5'-flap endonuclease and 5'-3' exonuclease activities involved in DNA replication and repair. During DNA replication, cleaves the 5'-overhanging flap structure that is generated by displacement synthesis when DNA polymerase encounters the 5'-end of a downstream Okazaki fragment. It enters the flap from the 5'-end and then tracks to cleave the flap base, leaving a nick for ligation. Also involved in the long patch base excision repair (LP-BER) pathway, by cleaving within the apurinic/apyrimidinic (AP) site-terminated flap. Acts as a genome stabilization factor that prevents flaps from equilibrating into structures that lead to duplications and deletions. Also possesses 5'-3' exonuclease activity on nicked or gapped double-stranded DNA, and exhibits RNase H activity. Also involved in replication and repair of rDNA and in repairing mitochondrial DNA. This chain is Flap endonuclease 1, found in Drosophila pseudoobscura pseudoobscura (Fruit fly).